We begin with the raw amino-acid sequence, 270 residues long: MIOREX complex component 3 (270 aa).

The N-terminal 12 residues, 1 to 12 (MSRTIPFLFKLV), are a transit peptide targeting the mitochondrion.

In terms of assembly, associates with the mitochondrial ribosome.

The protein resides in the mitochondrion. Component of MIOREX complexes, large expressome-like assemblies of ribosomes with factors involved in all the steps of post-transcriptional gene expression. This chain is MIOREX complex component 3, found in Saccharomyces cerevisiae (strain ATCC 204508 / S288c) (Baker's yeast).